The sequence spans 940 residues: Protein translocase subunit SecA (940 aa).

Residues Gln-86, 104-108, and Asp-494 contribute to the ATP site; that span reads GEGKT. The tract at residues 884–940 is disordered; sequence ATAKAQKDQQAEDAVLVGEDEPETPQGPPARGAFGQPTGASSAPQNREERRKADRRK. Residues 929–940 show a composition bias toward basic and acidic residues; that stretch reads NREERRKADRRK.

It belongs to the SecA family. In terms of assembly, monomer and homodimer. Part of the essential Sec protein translocation apparatus which comprises SecA, SecYEG and auxiliary proteins SecDF. Other proteins may also be involved.

The protein localises to the cell membrane. The protein resides in the cytoplasm. The catalysed reaction is ATP + H2O + cellular proteinSide 1 = ADP + phosphate + cellular proteinSide 2.. Its function is as follows. Part of the Sec protein translocase complex. Interacts with the SecYEG preprotein conducting channel. Has a central role in coupling the hydrolysis of ATP to the transfer of proteins into and across the cell membrane, serving as an ATP-driven molecular motor driving the stepwise translocation of polypeptide chains across the membrane. The protein is Protein translocase subunit SecA of Clavibacter sepedonicus (Clavibacter michiganensis subsp. sepedonicus).